Here is a 194-residue protein sequence, read N- to C-terminus: GTP cyclohydrolase 1 (194 aa).

Residues Cys-85, His-88, and Cys-156 each coordinate Zn(2+).

The protein belongs to the GTP cyclohydrolase I family. In terms of assembly, toroid-shaped homodecamer, composed of two pentamers of five dimers.

The catalysed reaction is GTP + H2O = 7,8-dihydroneopterin 3'-triphosphate + formate + H(+). The protein operates within cofactor biosynthesis; 7,8-dihydroneopterin triphosphate biosynthesis; 7,8-dihydroneopterin triphosphate from GTP: step 1/1. The polypeptide is GTP cyclohydrolase 1 (Bacteroides fragilis (strain YCH46)).